The chain runs to 251 residues: Fibroblast growth factor 23 (251 aa).

Positions 1–24 are cleaved as a signal peptide; that stretch reads MLGACLRLLVGALCTVCSLGTARA. C95 and C113 are disulfide-bonded. Residues T171 and T178 are each glycosylated (O-linked (GalNAc) threonine). Residues 175-251 are disordered; it reads RRHTRSAEDP…DRCRPFPRFV (77 aa). Basic and acidic residues predominate over residues 179-189; the sequence is RSAEDPPERDP. S180 carries the phosphoserine; by FAM20C modification.

The protein belongs to the heparin-binding growth factors family. In terms of assembly, interacts with FGFR1, FGFR2, FGFR3 and FGFR4. Affinity between fibroblast growth factors (FGFs) and their receptors is increased by KL and heparan sulfate glycosaminoglycans that function as coreceptors. Post-translationally, following secretion this protein is inactivated by cleavage into a N-terminal fragment and a C-terminal fragment. The processing is effected by proprotein convertases. O-glycosylated at Thr-171 and Thr-178 by GALNT3 and glycosylation of Thr-178 requires previous glycosylation at Thr171. Glycosylation is necessary for secretion; it blocks processing by proprotein convertases when the O-glycan is alpha 2,6-sialylated. Competition between proprotein convertase cleavage and block of cleavage by O-glycosylation determines the level of secreted active FGF23. In terms of processing, phosphorylation at Ser-180 mediated by FAM20C slows down glycosylation at Thr-178 notably. In terms of tissue distribution, expressed in the parathyroid.

It localises to the secreted. Regulator of phosphate homeostasis. Inhibits renal tubular phosphate transport by reducing SLC34A1 levels. Regulator of vitamin-D metabolism. Negatively regulates osteoblasts differentiation and matrix mineralization. Acts directly on the parathyroid to decrease PTH secretion. Up-regulates EGR1 expression in the presence of KL. The protein is Fibroblast growth factor 23 (Fgf23) of Rattus norvegicus (Rat).